A 412-amino-acid chain; its full sequence is Odorant receptor 47b (412 aa).

Topologically, residues 1-74 are cytoplasmic; it reads MNDSGYQSNL…NLFIMCNVMT (74 aa). The chain crosses the membrane as a helical span at residues 75 to 95; the sequence is IFWTMFVALPESKNVIEMGDD. At 96–103 the chain is on the extracellular side; that stretch reads LVWISGMA. The chain crosses the membrane as a helical span at residues 104–124; it reads LVFTKIFYMHLRCDEIDELIS. Residues 125 to 169 lie on the Cytoplasmic side of the membrane; it reads DFEYYNRELRPHNIDEEVLGWQRLCYVIESGLYINCFCLVNFFSA. Residues 170 to 190 traverse the membrane as a helical segment; it reads AIFLQPLLGEGKLPFHSVYPF. Residues 191–229 lie on the Extracellular side of the membrane; that stretch reads QWHRLDLHPYTFWFLYIWQSLTSQHNLMSILMVDMVGIS. Residues 230–250 form a helical membrane-spanning segment; that stretch reads TFLQTALNLKLLCIEIRKLGD. Topologically, residues 251–302 are cytoplasmic; the sequence is MEVSDKRFHEEFCRVVRFHQHIIKLVGKANRAFNGAFNAQLMASFSLISIST. The helical transmembrane segment at 303 to 323 threads the bilayer; that stretch reads FETMAAAAVDPKMAAKFVLLM. Over 324-330 the chain is Extracellular; the sequence is LVAFIQL. A helical membrane pass occupies residues 331 to 351; that stretch reads SLWCVSGTLVYTQSVEVAQAA. The Cytoplasmic segment spans residues 352-389; sequence FDINDWHTKSPGIQRDISFVILRAQKPLMYVAEPFLPF. A helical membrane pass occupies residues 390–410; sequence TLGTYMLVLKNCYRLLALMQE. Topologically, residues 411–412 are extracellular; the sequence is SM.

This sequence belongs to the insect chemoreceptor superfamily. Heteromeric odorant receptor channel (TC 1.A.69) family. Or49a subfamily. Interacts with Orco. Complexes exist early in the endomembrane system in olfactory sensory neurons (OSNs), coupling these complexes to the conserved ciliary trafficking pathway. In terms of tissue distribution, expressed in olfactory sensory neurons in the antenna.

The protein resides in the cell membrane. Functionally, odorant receptor which mediates acceptance or avoidance behavior, depending on its substrates. The odorant receptor repertoire encodes a large collection of odor stimuli that vary widely in identity, intensity, and duration. May form a complex with Orco to form odorant-sensing units, providing sensitive and prolonged odorant signaling and calcium permeability. Plays an important role in sociosexual interactions since its enhances courtship in a pheromone-dependent manner. The polypeptide is Odorant receptor 47b (Or47b) (Drosophila melanogaster (Fruit fly)).